Reading from the N-terminus, the 814-residue chain is Rho GTPase-activating protein 26 (814 aa).

The BAR domain occupies 7-262 (EFSDCCLDSP…MKENPLEHKT (256 aa)). The 105-residue stretch at 265 to 369 (PYTMEGYLYV…WMEAMDGREP (105 aa)) folds into the PH domain. A Rho-GAP domain is found at 383–568 (AQLDSIGFSI…ILIENHEKIF (186 aa)). Disordered regions lie at residues 584–618 (SRKK…QRNS) and 638–696 (SSSL…SSDS). 2 stretches are compositionally biased toward low complexity: residues 591-600 (SKPPSCSKRP) and 638-661 (SSSL…SRPS). The segment covering 662–672 (SLPPNPSPTSP) has biased composition (pro residues). Phosphoserine is present on Ser-668. Thr-670 is modified (phosphothreonine). Ser-671 bears the Phosphoserine mark. Over residues 673–696 (LSPSWPMFSAPSSPMPTSSTSSDS) the composition is skewed to low complexity. One can recognise an SH3 domain in the interval 756–814 (TPFRKAKALYACQAEHDSELSFTAGTVFDNVHPSQEPGWLEGTLNGKTGLIPENYVEFL).

As to quaternary structure, interacts with NYAP1, NYAP2 and MYO16. Interacts with MICAL1 and WDR44. Binds to the C-terminus of PTK2/FAK1. Post-translationally, phosphorylated in a PINK1-dependent fashion promoting retrograde mitochondrial trafficking and clustering.

The protein resides in the cell junction. The protein localises to the focal adhesion. Its subcellular location is the cytoplasm. It is found in the cytoskeleton. It localises to the endosome membrane. GTPase-activating protein for RHOA and CDC42. Facilitates mitochondrial quality control by promoting Parkin-mediated recruitment of autophagosomes to damaged mitochondria. Associates with MICAL1 on the endosomal membrane to promote Rab8-Rab10-dependent tubule extension. After dissociation of MICAL1, recruits WDR44 which connects the endoplasmic reticulum (ER) with the endosomal tubule, thereby participating in the export of a subset of neosynthesized proteins. The polypeptide is Rho GTPase-activating protein 26 (Arhgap26) (Mus musculus (Mouse)).